A 133-amino-acid chain; its full sequence is Small ribosomal subunit protein uS8 (133 aa).

It belongs to the universal ribosomal protein uS8 family. Part of the 30S ribosomal subunit. Contacts proteins S5 and S12.

In terms of biological role, one of the primary rRNA binding proteins, it binds directly to 16S rRNA central domain where it helps coordinate assembly of the platform of the 30S subunit. The sequence is that of Small ribosomal subunit protein uS8 from Microcystis aeruginosa (strain NIES-843 / IAM M-2473).